A 165-amino-acid polypeptide reads, in one-letter code: Short form salivary protein D7R4 (165 aa).

The N-terminal stretch at 1–21 (MIRQVITSYFLTVCLLALVQG) is a signal peptide. Disulfide bonds link Cys27-Cys59, Cys40-Cys165, and Cys98-Cys117. The noradrenaline site is built by Glu28 and Arg43. Glu28 is a serotonin binding site. Residues His56, Tyr115, Asp132, and Glu135 each contribute to the serotonin site. Residues Tyr115, Asp132, and Glu135 each coordinate histamine. Positions 115, 132, and 135 each coordinate tryptamine. Noradrenaline is bound by residues Asp132 and Glu135.

It belongs to the PBP/GOBP family. As to expression, female saliva (at protein level). Female salivary gland. Not detected in female carcass without salivary glands. Not detected in male tissues.

The protein resides in the secreted. In terms of biological role, modulates blood feeding of female mosquitoes on vertebrate species by binding and sequestering different mediators involved in the host response. Binds serotonin, noradrenaline, histamine and tryptamine. Inhibits histamine-, serotonin- and partially noradrenaline-induced smooth muscle contraction. Exhibits vasodilating activity. This chain is Short form salivary protein D7R4, found in Anopheles gambiae (African malaria mosquito).